Here is a 1171-residue protein sequence, read N- to C-terminus: ATP-dependent helicase/deoxyribonuclease subunit B (1171 aa).

Belongs to the helicase family. AddB/RexB type 2 subfamily. Heterodimer of AddA and RexB. Requires Mg(2+) as cofactor.

Functionally, the heterodimer acts as both an ATP-dependent DNA helicase and an ATP-dependent, dual-direction single-stranded exonuclease. Recognizes the chi site generating a DNA molecule suitable for the initiation of homologous recombination. This subunit has 5' -&gt; 3' nuclease activity but not helicase activity. The protein is ATP-dependent helicase/deoxyribonuclease subunit B of Leuconostoc citreum (strain KM20).